The chain runs to 262 residues: Phosphatidylserine decarboxylase proenzyme (262 aa).

Residues aspartate 86, histidine 142, and serine 226 each act as charge relay system; for autoendoproteolytic cleavage activity in the active site. Serine 226 functions as the Schiff-base intermediate with substrate; via pyruvic acid; for decarboxylase activity in the catalytic mechanism. Serine 226 bears the Pyruvic acid (Ser); by autocatalysis mark.

The protein belongs to the phosphatidylserine decarboxylase family. PSD-B subfamily. Prokaryotic type I sub-subfamily. Heterodimer of a large membrane-associated beta subunit and a small pyruvoyl-containing alpha subunit. The cofactor is pyruvate. Is synthesized initially as an inactive proenzyme. Formation of the active enzyme involves a self-maturation process in which the active site pyruvoyl group is generated from an internal serine residue via an autocatalytic post-translational modification. Two non-identical subunits are generated from the proenzyme in this reaction, and the pyruvate is formed at the N-terminus of the alpha chain, which is derived from the carboxyl end of the proenzyme. The autoendoproteolytic cleavage occurs by a canonical serine protease mechanism, in which the side chain hydroxyl group of the serine supplies its oxygen atom to form the C-terminus of the beta chain, while the remainder of the serine residue undergoes an oxidative deamination to produce ammonia and the pyruvoyl prosthetic group on the alpha chain. During this reaction, the Ser that is part of the protease active site of the proenzyme becomes the pyruvoyl prosthetic group, which constitutes an essential element of the active site of the mature decarboxylase.

The protein resides in the cell membrane. The enzyme catalyses a 1,2-diacyl-sn-glycero-3-phospho-L-serine + H(+) = a 1,2-diacyl-sn-glycero-3-phosphoethanolamine + CO2. It functions in the pathway phospholipid metabolism; phosphatidylethanolamine biosynthesis; phosphatidylethanolamine from CDP-diacylglycerol: step 2/2. Its function is as follows. Catalyzes the formation of phosphatidylethanolamine (PtdEtn) from phosphatidylserine (PtdSer). The chain is Phosphatidylserine decarboxylase proenzyme from Bacillus anthracis.